Here is a 141-residue protein sequence, read N- to C-terminus: MRQRTIVCPLIQNDGCYLLCKMADNRGVFPGQWALSGGGVEPGERIEEALRREIREELGEQLILSDITPWTFRDDIRVKTYADGRQEEIYMIYLIFDCVSANRDICINDEFQDYAWVRPEEFALYDLNVATRHTLRLKGLL.

The Nudix hydrolase domain occupies 1 to 141 (MRQRTIVCPL…RHTLRLKGLL (141 aa)). Positions 38–59 (GGVEPGERIEEALRREIREELG) match the Nudix box motif.

The protein belongs to the Nudix hydrolase family. NudI subfamily. As to quaternary structure, monomer. Requires Mg(2+) as cofactor.

The enzyme catalyses a ribonucleoside 5'-triphosphate + H2O = a ribonucleoside 5'-phosphate + diphosphate + H(+). It catalyses the reaction a 2'-deoxyribonucleoside 5'-triphosphate + H2O = a 2'-deoxyribonucleoside 5'-phosphate + diphosphate + H(+). The catalysed reaction is dUTP + H2O = dUMP + diphosphate + H(+). It carries out the reaction dTTP + H2O = dTMP + diphosphate + H(+). The enzyme catalyses dCTP + H2O = dCMP + diphosphate + H(+). Its function is as follows. Catalyzes the hydrolysis of nucleoside triphosphates, with a preference for pyrimidine deoxynucleoside triphosphates (dUTP, dTTP and dCTP). This chain is Nucleoside triphosphatase NudI, found in Salmonella arizonae (strain ATCC BAA-731 / CDC346-86 / RSK2980).